Consider the following 922-residue polypeptide: Isoleucine--tRNA ligase (922 aa).

A 'HIGH' region motif is present at residues 57 to 67 (PYANGDIHLGH). Glu553 is a binding site for L-isoleucyl-5'-AMP. A 'KMSKS' region motif is present at residues 594-598 (KMSKS). Lys597 contacts ATP. Zn(2+) is bound by residues Cys892, Cys895, Cys912, and Cys915.

This sequence belongs to the class-I aminoacyl-tRNA synthetase family. IleS type 1 subfamily. In terms of assembly, monomer. The cofactor is Zn(2+).

The protein resides in the cytoplasm. The catalysed reaction is tRNA(Ile) + L-isoleucine + ATP = L-isoleucyl-tRNA(Ile) + AMP + diphosphate. In terms of biological role, catalyzes the attachment of isoleucine to tRNA(Ile). As IleRS can inadvertently accommodate and process structurally similar amino acids such as valine, to avoid such errors it has two additional distinct tRNA(Ile)-dependent editing activities. One activity is designated as 'pretransfer' editing and involves the hydrolysis of activated Val-AMP. The other activity is designated 'posttransfer' editing and involves deacylation of mischarged Val-tRNA(Ile). The polypeptide is Isoleucine--tRNA ligase (Desulfitobacterium hafniense (strain Y51)).